Here is a 334-residue protein sequence, read N- to C-terminus: N-chimaerin (334 aa).

Positions 1–10 (MPSKESWSGR) are enriched in polar residues. Residues 1-22 (MPSKESWSGRKTNRATVHKSKQ) form a disordered region. Threonine 67 carries the phosphothreonine modification. Residues 80 to 130 (VHNFKVHTFRGPHWCEYCANFMWGLIAQGVKCADCGLNVHKQCSKMVPNDC) form a Phorbol-ester/DAG-type zinc finger. In terms of domain architecture, Rho-GAP spans 143-334 (CDLTTLVKAR…LLIKNEDILF (192 aa)). Phosphothreonine is present on threonine 215.

As to quaternary structure, interacts with EPHA4; effector of EPHA4 in axon guidance linking EPHA4 activation to RAC1 regulation. In terms of processing, phosphorylated. Phosphorylation is EPHA4 kinase activity-dependent.

In terms of biological role, GTPase-activating protein for p21-rac and a phorbol ester receptor. Involved in the assembly of neuronal locomotor circuits as a direct effector of EPHA4 in axon guidance. The polypeptide is N-chimaerin (CHN1) (Bos taurus (Bovine)).